Reading from the N-terminus, the 191-residue chain is Holliday junction branch migration complex subunit RuvA (191 aa).

The segment at 1–64 is domain I; the sequence is MIGSITGNVE…DNITQLYGFL (64 aa). Residues 65-142 form a domain II region; it reads NRQEQDYLKM…KMPIEETFSI (78 aa). Residues 143 to 146 are flexible linker; the sequence is IEND. Residues 146–191 are domain III; sequence DDSLAALISLGYEKLKAFNVIQEIKSKTPDASTQEVIRKALQKLSQ.

It belongs to the RuvA family. In terms of assembly, homotetramer. Forms an RuvA(8)-RuvB(12)-Holliday junction (HJ) complex. HJ DNA is sandwiched between 2 RuvA tetramers; dsDNA enters through RuvA and exits via RuvB. An RuvB hexamer assembles on each DNA strand where it exits the tetramer. Each RuvB hexamer is contacted by two RuvA subunits (via domain III) on 2 adjacent RuvB subunits; this complex drives branch migration. In the full resolvosome a probable DNA-RuvA(4)-RuvB(12)-RuvC(2) complex forms which resolves the HJ.

The protein resides in the cytoplasm. Functionally, the RuvA-RuvB-RuvC complex processes Holliday junction (HJ) DNA during genetic recombination and DNA repair, while the RuvA-RuvB complex plays an important role in the rescue of blocked DNA replication forks via replication fork reversal (RFR). RuvA specifically binds to HJ cruciform DNA, conferring on it an open structure. The RuvB hexamer acts as an ATP-dependent pump, pulling dsDNA into and through the RuvAB complex. HJ branch migration allows RuvC to scan DNA until it finds its consensus sequence, where it cleaves and resolves the cruciform DNA. This Ehrlichia ruminantium (strain Welgevonden) protein is Holliday junction branch migration complex subunit RuvA.